A 242-amino-acid chain; its full sequence is ATP-dependent dethiobiotin synthetase BioD 1 (242 aa).

Residue 12–17 participates in ATP binding; the sequence is NVGKTT. Threonine 16 is a binding site for Mg(2+). Residue lysine 37 is part of the active site. Residue aspartate 66 participates in ATP binding. Residues aspartate 66 and glutamate 124 each contribute to the Mg(2+) site. ATP is bound by residues 184-185, 213-215, and glutamate 220; these read NR and PYL.

The protein belongs to the dethiobiotin synthetase family. Homodimer. Mg(2+) serves as cofactor.

The protein localises to the cytoplasm. It catalyses the reaction (7R,8S)-7,8-diammoniononanoate + CO2 + ATP = (4R,5S)-dethiobiotin + ADP + phosphate + 3 H(+). It participates in cofactor biosynthesis; biotin biosynthesis; biotin from 7,8-diaminononanoate: step 1/2. In terms of biological role, catalyzes a mechanistically unusual reaction, the ATP-dependent insertion of CO2 between the N7 and N8 nitrogen atoms of 7,8-diaminopelargonic acid (DAPA, also called 7,8-diammoniononanoate) to form a ureido ring. This Haemophilus influenzae (strain ATCC 51907 / DSM 11121 / KW20 / Rd) protein is ATP-dependent dethiobiotin synthetase BioD 1.